The chain runs to 132 residues: Agouti-signaling protein (132 aa).

Residues 1–22 (MDVTRLLLATLLVFLCFFTANS) form the signal peptide. An N-linked (GlcNAc...) asparagine glycan is attached at asparagine 39. The disordered stretch occupies residues 61 to 87 (QIGRKEAEKKRSSKKEASMKKVARPRT). Positions 63 to 79 (GRKEAEKKRSSKKEASM) are enriched in basic and acidic residues. 5 disulfide bridges follow: cysteine 93-cysteine 108, cysteine 100-cysteine 114, cysteine 107-cysteine 125, cysteine 111-cysteine 132, and cysteine 116-cysteine 123. One can recognise an Agouti domain in the interval 93 to 132 (CVATRNSCKPPAPACCDPCASCQCRFFRSACSCRVLSLNC).

It is found in the secreted. Its function is as follows. Involved in the regulation of melanogenesis. The binding of ASP to MC1R precludes alpha-MSH initiated signaling and thus blocks production of cAMP, leading to a down-regulation of eumelanogenesis (brown/black pigment) and thus increasing synthesis of pheomelanin (yellow/red pigment). In Gorilla gorilla gorilla (Western lowland gorilla), this protein is Agouti-signaling protein (ASIP).